The following is a 504-amino-acid chain: Maturase K (504 aa).

This sequence belongs to the intron maturase 2 family. MatK subfamily.

The protein localises to the plastid. The protein resides in the chloroplast. In terms of biological role, usually encoded in the trnK tRNA gene intron. Probably assists in splicing its own and other chloroplast group II introns. The chain is Maturase K from Pentaplaris doroteae.